Reading from the N-terminus, the 667-residue chain is MIHELLLALSGYPGSIFTWNKRSGLQVSQDFPFLHPSETSVLNRLCRLGTDYIRFTEFIEQYTGHVQQQDHHPSQQGQGGLHGIYLRAFCTGLDSVLQPYRQALLDLEQEFLGDPHLSISHVNYFLDQFQLLFPSVMVVVEQIKSQKIHGCQILETVYKHSCGGLPPVRSALEKILAVCHGVMYKQLSAWMLHGLLLDQHEEFFIKQGPSSGNVSAQPEEDEEDLGIGGLTGKQLRELQDLRLIEEENMLAPSLKQFSLRVEILPSYIPVRVAEKILFVGESVQMFENQNVNLTRKGSILKNQEDTFAAELHRLKQQPLFSLVDFEQVVDRIRSTVAEHLWKLMVEESDLLGQLKIIKDFYLLGRGELFQAFIDTAQHMLKTPPTAVTEHDVNVAFQQSAHKVLLDDDNLLPLLHLTIEYHGKEHKADATQAREGPSRETSPREAPASGWAALGLSYKVQWPLHILFTPAVLEKYNVVFKYLLSVRRVQAELQHCWALQMQRKHLKSNQTDAIKWRLRNHMAFLVDNLQYYLQVDVLESQFSQLLHQINSTRDFESIRLAHDHFLSNLLAQSFILLKPVFHCLNEILDLCHSFCSLVSQNLGPLDERGAAQLSILVKGFSRQSSLLFKILSSVRNHQINSDLAQLLLRLDYNKYYTQAGGTLGSFGM.

The segment at 425–445 (HKADATQAREGPSRETSPREA) is disordered.

Belongs to the TUBGCP family. In terms of assembly, component of the gamma-tubulin ring complex (gTuRC) consisting of TUBGCP2, TUBGCP3, TUBGCP4, TUBGCP5 and TUBGCP6 and gamma-tubulin TUBG1 or TUBG2. TUBGCP2, TUBGCP3, TUBGCP4, TUBGCP5 and TUBGCP6 assemble in a 5:5:2:1:1 stoichiometry; each is associated with a gamma-tubulin, thereby arranging 14 gamma-tubulins in a helical manner. Gamma-tubulin at the first position is blocked by TUBGCP3 at the last position, allowing 13 protafilaments to grow into a microtubule. The gTuRC (via TUBGCP3 and TUBGCP6) interacts with ACTB and MZT1; the interactions form a luminal bridge that stabilizes the initial structure during complex assembly. The gTuRC (via TUBGCP2) interacts with MZT2A/MZT2B and CDK5RAP2 (via CM1 motif); the interactions play a role in gTuRC activation. Interacts with NINL. Interacts with ATF5; the ATF5:PCNT:polyglutamylated tubulin (PGT) tripartite unites the mother centriole and the pericentriolar material (PCM) in the centrosome. As to expression, ubiquitously expressed.

The protein resides in the cytoplasm. It is found in the cytoskeleton. The protein localises to the microtubule organizing center. It localises to the centrosome. Component of the gamma-tubulin ring complex (gTuRC) which mediates microtubule nucleation. The gTuRC regulates the minus-end nucleation of alpha-beta tubulin heterodimers that grow into microtubule protafilaments, a critical step in centrosome duplication and spindle formation. In Homo sapiens (Human), this protein is Gamma-tubulin complex component 4 (TUBGCP4).